The sequence spans 648 residues: Zinc finger protein grt1 (648 aa).

A DNA-binding region (zn(2)-C6 fungal-type) is located at residues 13–42; sequence ACENCRKRKVKCSGGDVCFECQKYNENCVY.

As to quaternary structure, monomer.

The protein resides in the nucleus. Functionally, may be involved in the facilitation of anaphase progression in mitosis. The protein is Zinc finger protein grt1 (grt1) of Schizosaccharomyces pombe (strain 972 / ATCC 24843) (Fission yeast).